The sequence spans 179 residues: Interleukin-22b (179 aa).

Positions 1-33 (MAVLQKSMSFSLMGTLAASCLLLIALWAQEANA) are cleaved as a signal peptide. Cystine bridges form between Cys-40–Cys-132 and Cys-89–Cys-178. 3 N-linked (GlcNAc...) asparagine glycosylation sites follow: Asn-54, Asn-68, and Asn-97.

It belongs to the IL-10 family.

It localises to the secreted. Functionally, cytokine that contributes to the inflammatory response in vivo. The sequence is that of Interleukin-22b from Mus musculus (Mouse).